A 271-amino-acid polypeptide reads, in one-letter code: uncharacterized protein (271 aa).

Belongs to the HAD-like hydrolase superfamily.

This is an uncharacterized protein from Staphylococcus aureus.